The chain runs to 655 residues: p-hydroxybenzoic acid efflux pump subunit AaeB (655 aa).

Transmembrane regions (helical) follow at residues 13 to 33 (FAVK…HFQL), 38 to 58 (WAVL…GGEP), 69 to 89 (LRII…IAMI), 93 to 113 (LLMI…SSLV), 121 to 141 (WGLA…EPLL), 152 to 172 (EIVI…PRSI), 370 to 390 (LFWL…IAVV), 407 to 427 (FIYG…VIIP), 431 to 451 (QSML…GIEV), and 482 to 502 (FLDS…VILL).

This sequence belongs to the aromatic acid exporter ArAE (TC 2.A.85) family.

The protein localises to the cell inner membrane. Functionally, forms an efflux pump with AaeA. Could function as a metabolic relief valve, allowing to eliminate certain compounds when they accumulate to high levels in the cell. The chain is p-hydroxybenzoic acid efflux pump subunit AaeB from Shigella dysenteriae serotype 1 (strain Sd197).